Consider the following 223-residue polypeptide: MKPAVVLLSGGLDSATTLAIARREGFACHAMSFDYGQRHGAELKAARRLAQSLGAIEHKTVHIGLDAIGGSALTDLRIAVPDHPQNGIPVTYVPARNTVFLSFALGWAEVLGALDIFIGVNAVDYSGYPDCRPEFIRAFEQLANLATKVGVEGGRFRIHTPLIDLSKADIIRTGTALGIDYAMTVSCYAADAEGLACGVCDSCRLRRQGFEQAGIADPTRYRS.

Residue 8–18 (LSGGLDSATTL) participates in ATP binding. Positions 187, 197, 200, and 203 each coordinate Zn(2+).

The protein belongs to the QueC family. The cofactor is Zn(2+).

It carries out the reaction 7-carboxy-7-deazaguanine + NH4(+) + ATP = 7-cyano-7-deazaguanine + ADP + phosphate + H2O + H(+). It functions in the pathway purine metabolism; 7-cyano-7-deazaguanine biosynthesis. Functionally, catalyzes the ATP-dependent conversion of 7-carboxy-7-deazaguanine (CDG) to 7-cyano-7-deazaguanine (preQ(0)). This Methylococcus capsulatus (strain ATCC 33009 / NCIMB 11132 / Bath) protein is 7-cyano-7-deazaguanine synthase.